Consider the following 667-residue polypeptide: MGDNVFLEPDPWASSSNWGSPVKPLNYKTAIGNSSIPLQYRNYWDVFQANNVLLFPEEESYSDIFHVPQDVMKEFFTLIESSSNQPLRQIQFFVLLALVACYQLGVPSTLEQIFKQRNVLPILQRFNPELFNRSSDNETPLFPNNSPPASTTALNLSSNIVPSINESKILEQEDDDVSNKSLPHAQQSIIRSFPDIQKQPKGFFSYPSSTVSSIAPSTLEAGNLHSQQPPKFSVDSSVDDNAITPRKPFSKIPNRLSPSTQPLLSNSRHSSFRLASSSTSFPASLEMNVDIDLEPSGYFFYRHNNYIISDSSNTREVLRRYSDFFWLHSYLMKKYPFRRVPLIPLKKFHFAKRNASTQNSFLEHRRQELSDFVNDLSHHPIFSNDEVVRVFFTEPNVFKNWRRENQKRIDQEIEQFLVVPQSQVPDASETVKERLLKLNMSTTTAINNQLNIFRIFEKMIFTLQHFHEDFLRLQNSFNCLLDSGLYHQVFTSTFAQNESKIMSMASGHFYNIDSLLHQQNDAVKHTFLLGLSKEIKILISLRLLIERISEVFSTDLTKVRHTISNDENLLRETANSDESGRNRTFLNRSSKKRAENSLKSKKELYLKNLNQRYQIAHELEQELSYLQDYVFSLGNPYVEYCKQHVKLEEESLKIWHTLESDFSRLET.

A disordered region spans residues 221–268 (AGNLHSQQPPKFSVDSSVDDNAITPRKPFSKIPNRLSPSTQPLLSNSR). Polar residues predominate over residues 224–236 (LHSQQPPKFSVDS). Residues 279-398 (TSFPASLEMN…RVFFTEPNVF (120 aa)) form the PX domain. Residues Arg-320, Ser-322, and Lys-346 each contribute to the a 1,2-diacyl-sn-glycero-3-phospho-(1D-myo-inositol-3-phosphate) site. Residues 574 to 594 (ANSDESGRNRTFLNRSSKKRA) form a disordered region.

The protein belongs to the sorting nexin family. As to quaternary structure, homodimer. Forms an autoinhibited tetramer consisting of 2 homodimers that self-interact, wherein the membrane-interacting BAR surfaces are sequestered and the PX lipid-binding sites are occluded. Interacts with Vps1.

The protein resides in the cytoplasm. It localises to the endosome membrane. In terms of biological role, required for vacuolar protein sorting. Component of the retromer-mediated endosome-to-Golgi retrograde pathway. Required for efficient cargo export from the endosome, promoting Vps1-mediated fission of retromer-coated tubules that bud from the endosome. The polypeptide is Sorting nexin mvp1 (mvp1) (Schizosaccharomyces pombe (strain 972 / ATCC 24843) (Fission yeast)).